The chain runs to 336 residues: Aspartate--ammonia ligase (336 aa).

The protein belongs to the class-II aminoacyl-tRNA synthetase family. AsnA subfamily.

It localises to the cytoplasm. It catalyses the reaction L-aspartate + NH4(+) + ATP = L-asparagine + AMP + diphosphate + H(+). Its pathway is amino-acid biosynthesis; L-asparagine biosynthesis; L-asparagine from L-aspartate (ammonia route): step 1/1. This chain is Aspartate--ammonia ligase, found in Clostridium perfringens (strain 13 / Type A).